Reading from the N-terminus, the 250-residue chain is Triosephosphate isomerase (250 aa).

Residue 9-11 (NWK) participates in substrate binding. Catalysis depends on H95, which acts as the Electrophile. E167 functions as the Proton acceptor in the catalytic mechanism. Substrate-binding positions include G173, S212, and 233–234 (GG).

Belongs to the triosephosphate isomerase family. As to quaternary structure, homodimer.

The protein resides in the cytoplasm. The catalysed reaction is D-glyceraldehyde 3-phosphate = dihydroxyacetone phosphate. It participates in carbohydrate biosynthesis; gluconeogenesis. Its pathway is carbohydrate degradation; glycolysis; D-glyceraldehyde 3-phosphate from glycerone phosphate: step 1/1. Its function is as follows. Involved in the gluconeogenesis. Catalyzes stereospecifically the conversion of dihydroxyacetone phosphate (DHAP) to D-glyceraldehyde-3-phosphate (G3P). The protein is Triosephosphate isomerase of Psychromonas ingrahamii (strain DSM 17664 / CCUG 51855 / 37).